Here is a 154-residue protein sequence, read N- to C-terminus: UPF0178 protein YaiI (154 aa).

It belongs to the UPF0178 family.

In Escherichia coli (strain ATCC 8739 / DSM 1576 / NBRC 3972 / NCIMB 8545 / WDCM 00012 / Crooks), this protein is UPF0178 protein YaiI.